Here is a 418-residue protein sequence, read N- to C-terminus: Serine hydroxymethyltransferase (418 aa).

(6S)-5,6,7,8-tetrahydrofolate is bound by residues L121 and 125–127 (GHL). K230 is subject to N6-(pyridoxal phosphate)lysine. (6S)-5,6,7,8-tetrahydrofolate is bound at residue 356 to 358 (SPF).

This sequence belongs to the SHMT family. As to quaternary structure, homodimer. Pyridoxal 5'-phosphate is required as a cofactor.

It is found in the cytoplasm. It carries out the reaction (6R)-5,10-methylene-5,6,7,8-tetrahydrofolate + glycine + H2O = (6S)-5,6,7,8-tetrahydrofolate + L-serine. Its pathway is one-carbon metabolism; tetrahydrofolate interconversion. It participates in amino-acid biosynthesis; glycine biosynthesis; glycine from L-serine: step 1/1. In terms of biological role, catalyzes the reversible interconversion of serine and glycine with tetrahydrofolate (THF) serving as the one-carbon carrier. This reaction serves as the major source of one-carbon groups required for the biosynthesis of purines, thymidylate, methionine, and other important biomolecules. Also exhibits THF-independent aldolase activity toward beta-hydroxyamino acids, producing glycine and aldehydes, via a retro-aldol mechanism. This is Serine hydroxymethyltransferase from Pseudoalteromonas atlantica (strain T6c / ATCC BAA-1087).